The following is a 779-amino-acid chain: Phosphoribosylformylglycinamidine synthase subunit PurL (779 aa).

Residue histidine 52 is part of the active site. ATP is bound by residues tyrosine 55 and lysine 94. Position 96 (glutamate 96) interacts with Mg(2+). Substrate contacts are provided by residues 97 to 100 (SHNH) and arginine 119. The Proton acceptor role is filled by histidine 98. Aspartate 120 contacts Mg(2+). Residue glutamine 243 participates in substrate binding. Aspartate 271 is a binding site for Mg(2+). Residue 315–317 (ESQ) coordinates substrate. Residues asparagine 523 and glycine 560 each contribute to the ATP site. Asparagine 561 contacts Mg(2+). Serine 563 is a substrate binding site.

Belongs to the FGAMS family. In terms of assembly, monomer. Part of the FGAM synthase complex composed of 1 PurL, 1 PurQ and 2 PurS subunits.

The protein localises to the cytoplasm. The catalysed reaction is N(2)-formyl-N(1)-(5-phospho-beta-D-ribosyl)glycinamide + L-glutamine + ATP + H2O = 2-formamido-N(1)-(5-O-phospho-beta-D-ribosyl)acetamidine + L-glutamate + ADP + phosphate + H(+). It participates in purine metabolism; IMP biosynthesis via de novo pathway; 5-amino-1-(5-phospho-D-ribosyl)imidazole from N(2)-formyl-N(1)-(5-phospho-D-ribosyl)glycinamide: step 1/2. In terms of biological role, part of the phosphoribosylformylglycinamidine synthase complex involved in the purines biosynthetic pathway. Catalyzes the ATP-dependent conversion of formylglycinamide ribonucleotide (FGAR) and glutamine to yield formylglycinamidine ribonucleotide (FGAM) and glutamate. The FGAM synthase complex is composed of three subunits. PurQ produces an ammonia molecule by converting glutamine to glutamate. PurL transfers the ammonia molecule to FGAR to form FGAM in an ATP-dependent manner. PurS interacts with PurQ and PurL and is thought to assist in the transfer of the ammonia molecule from PurQ to PurL. This chain is Phosphoribosylformylglycinamidine synthase subunit PurL, found in Prochlorococcus marinus (strain AS9601).